A 322-amino-acid chain; its full sequence is Phospholipase A1 (322 aa).

A signal peptide spans 1–18 (MNFKYSILFICFGTLDRG). A disulfide bridge connects residues Cys23 and Cys106. Ser156 serves as the catalytic Nucleophile. Residue Asp184 is the Charge relay system of the active site. Cystine bridges form between Cys195-Cys200 and Cys238-Cys246. The active-site Charge relay system is His248. 3 disulfide bridges follow: Cys263-Cys290, Cys264-Cys315, and Cys283-Cys288.

The protein belongs to the AB hydrolase superfamily. Lipase family. In terms of processing, contains six disulfide bonds. Is not glycosylated. In terms of tissue distribution, expressed by the venom gland.

It localises to the secreted. It catalyses the reaction a 1,2-diacyl-sn-glycero-3-phosphocholine + H2O = a 2-acyl-sn-glycero-3-phosphocholine + a fatty acid + H(+). In terms of biological role, catalyzes the hydrolysis of phosphatidylcholine with phospholipase A1 activity. Shows hemolytic activity. Acts as an allergen. The sequence is that of Phospholipase A1 from Polybia paulista (Neotropical social wasp).